Consider the following 208-residue polypeptide: 3-demethoxyubiquinol 3-hydroxylase (208 aa).

Residues E57, E87, H90, E139, E171, and H174 each coordinate Fe cation.

It belongs to the COQ7 family. Requires Fe cation as cofactor.

It localises to the cell membrane. The enzyme catalyses a 5-methoxy-2-methyl-3-(all-trans-polyprenyl)benzene-1,4-diol + AH2 + O2 = a 3-demethylubiquinol + A + H2O. It functions in the pathway cofactor biosynthesis; ubiquinone biosynthesis. Its function is as follows. Catalyzes the hydroxylation of 2-nonaprenyl-3-methyl-6-methoxy-1,4-benzoquinol during ubiquinone biosynthesis. The polypeptide is 3-demethoxyubiquinol 3-hydroxylase (Burkholderia multivorans (strain ATCC 17616 / 249)).